Reading from the N-terminus, the 270-residue chain is Phosphatidylglycerol--prolipoprotein diacylglyceryl transferase (270 aa).

7 helical membrane passes run valine 10–isoleucine 30, leucine 56–tyrosine 76, tryptophan 92–phenylalanine 112, phenylalanine 120–isoleucine 140, serine 175–alanine 195, methionine 202–valine 222, and valine 237–leucine 257. Arginine 139 lines the a 1,2-diacyl-sn-glycero-3-phospho-(1'-sn-glycerol) pocket.

It belongs to the Lgt family.

Its subcellular location is the cell inner membrane. It catalyses the reaction L-cysteinyl-[prolipoprotein] + a 1,2-diacyl-sn-glycero-3-phospho-(1'-sn-glycerol) = an S-1,2-diacyl-sn-glyceryl-L-cysteinyl-[prolipoprotein] + sn-glycerol 1-phosphate + H(+). It functions in the pathway protein modification; lipoprotein biosynthesis (diacylglyceryl transfer). Its function is as follows. Catalyzes the transfer of the diacylglyceryl group from phosphatidylglycerol to the sulfhydryl group of the N-terminal cysteine of a prolipoprotein, the first step in the formation of mature lipoproteins. This is Phosphatidylglycerol--prolipoprotein diacylglyceryl transferase from Pseudomonas syringae pv. syringae (strain B728a).